The chain runs to 751 residues: Semaphorin-3C (751 aa).

The first 20 residues, 1-20 (MAFRTICVLVGVFICSICVK), serve as a signal peptide directing secretion. Residues 28 to 511 (RVYLTFDELR…SNEGVSQVSL (484 aa)) enclose the Sema domain. An N-linked (GlcNAc...) asparagine glycan is attached at asparagine 81. Cysteines 101 and 112 form a disulfide. Asparagine 123 is a glycosylation site (N-linked (GlcNAc...) asparagine). A disulfide bridge connects residues cysteine 130 and cysteine 139. Asparagine 252 and asparagine 268 each carry an N-linked (GlcNAc...) asparagine glycan. 2 disulfides stabilise this stretch: cysteine 266-cysteine 378 and cysteine 290-cysteine 338. The N-linked (GlcNAc...) asparagine glycan is linked to asparagine 465. Cysteines 514 and 532 form a disulfide. The region spanning 571-655 (AYRNAAEIVQ…TENSFKQTIA (85 aa)) is the Ig-like C2-type domain. N-linked (GlcNAc...) asparagine glycosylation is found at asparagine 585 and asparagine 586. A disulfide bridge links cysteine 643 with cysteine 709. Positions 712 to 731 (TRQQHQQGDESQKMRGDYGK) are enriched in basic and acidic residues. The segment at 712 to 751 (TRQQHQQGDESQKMRGDYGKLKALINSRKSRNRRNQLPES) is disordered.

The protein belongs to the semaphorin family. Interacts with PLXND1. Expressed intensely in the heart, skeletal muscle, colon, small intestine, ovary, testis, and prostate. Faint expression ubiquitously among other organs, including brain.

The protein localises to the secreted. Its function is as follows. Binds to plexin family members and plays an important role in the regulation of developmental processes. Required for normal cardiovascular development during embryogenesis. Functions as attractant for growing axons, and thereby plays an important role in axon growth and axon guidance. The polypeptide is Semaphorin-3C (SEMA3C) (Homo sapiens (Human)).